The primary structure comprises 196 residues: Na(+)-translocating ferredoxin:NAD(+) oxidoreductase complex subunit E (196 aa).

The next 5 membrane-spanning stretches (helical) occupy residues 38–58, 68–88, 92–112, 127–147, and 169–189; these read MGMG…ISAL, IPAF…LMKA, ALDA…IILA, FADA…LGSI, and VLLM…IGLI.

Belongs to the NqrDE/RnfAE family. In terms of assembly, the complex is composed of six subunits: RnfA, RnfB, RnfC, RnfD, RnfE and RnfG.

It is found in the cell membrane. It catalyses the reaction 2 reduced [2Fe-2S]-[ferredoxin] + Na(+)(in) + NAD(+) + H(+) = 2 oxidized [2Fe-2S]-[ferredoxin] + Na(+)(out) + NADH. Its function is as follows. Part of a membrane-bound complex that couples electron transfer with translocation of ions across the membrane. Couples electron transfer from reduced ferredoxin to NAD(+) with electrogenic movement of Na(+) out of the cell. Involved in caffeate respiration. This is Na(+)-translocating ferredoxin:NAD(+) oxidoreductase complex subunit E from Acetobacterium woodii (strain ATCC 29683 / DSM 1030 / JCM 2381 / KCTC 1655 / WB1).